The following is a 346-amino-acid chain: tRNA N6-adenosine threonylcarbamoyltransferase (346 aa).

Residues His-111 and His-115 each contribute to the Fe cation site. Substrate-binding positions include 134-138 (LVSGG), Asp-167, Gly-180, and Asn-279. Asp-307 lines the Fe cation pocket.

Belongs to the KAE1 / TsaD family. It depends on Fe(2+) as a cofactor.

Its subcellular location is the cytoplasm. It catalyses the reaction L-threonylcarbamoyladenylate + adenosine(37) in tRNA = N(6)-L-threonylcarbamoyladenosine(37) in tRNA + AMP + H(+). Required for the formation of a threonylcarbamoyl group on adenosine at position 37 (t(6)A37) in tRNAs that read codons beginning with adenine. Is involved in the transfer of the threonylcarbamoyl moiety of threonylcarbamoyl-AMP (TC-AMP) to the N6 group of A37, together with TsaE and TsaB. TsaD likely plays a direct catalytic role in this reaction. This is tRNA N6-adenosine threonylcarbamoyltransferase from Burkholderia vietnamiensis (strain G4 / LMG 22486) (Burkholderia cepacia (strain R1808)).